The sequence spans 129 residues: DNA-directed RNA polymerase subunit omega (129 aa).

The disordered stretch occupies residues 76 to 100 (EVDEPEPEAVPMIASGDSSGGEDSD).

Belongs to the RNA polymerase subunit omega family. The RNAP catalytic core consists of 2 alpha, 1 beta, 1 beta' and 1 omega subunit. When a sigma factor is associated with the core the holoenzyme is formed, which can initiate transcription.

The catalysed reaction is RNA(n) + a ribonucleoside 5'-triphosphate = RNA(n+1) + diphosphate. Promotes RNA polymerase assembly. Latches the N- and C-terminal regions of the beta' subunit thereby facilitating its interaction with the beta and alpha subunits. The chain is DNA-directed RNA polymerase subunit omega from Xanthobacter autotrophicus (strain ATCC BAA-1158 / Py2).